The sequence spans 749 residues: Protein lin-54 homolog (749 aa).

Residue lysine 139 forms a Glycyl lysine isopeptide (Lys-Gly) (interchain with G-Cter in SUMO2) linkage. Residues lysine 244 and lysine 249 each carry the N6-acetyllysine modification. Phosphoserine occurs at positions 264, 282, 310, and 314. A Glycyl lysine isopeptide (Lys-Gly) (interchain with G-Cter in SUMO2) cross-link involves residue lysine 357. The region spanning 521–634 is the CRC domain; it reads PRKPCNCTKS…KCIGCKNFEE (114 aa). The tract at residues 523–536 is DNA-binding; sequence KPCNCTKSLCLKLY. Zn(2+) is bound by residues cysteine 525, cysteine 527, cysteine 532, cysteine 537, cysteine 539, cysteine 546, cysteine 549, cysteine 551, and cysteine 554. The tract at residues 583–596 is linker; the sequence is IGKGKEGESDRRHS. The Zn(2+) site is built by cysteine 599, cysteine 601, cysteine 606, cysteine 611, cysteine 613, cysteine 620, cysteine 624, cysteine 626, and cysteine 629. The tract at residues 599–612 is DNA-binding; that stretch reads CNCKRSGCLKNYCE. The residue at position 635 (serine 635) is a Phosphoserine. Glycyl lysine isopeptide (Lys-Gly) (interchain with G-Cter in SUMO2) cross-links involve residues lysine 639, lysine 659, and lysine 661.

This sequence belongs to the lin-54 family. Component of the DREAM complex (also named LINC complex) at least composed of E2F4, E2F5, LIN9, LIN37, LIN52, LIN54, MYBL1, MYBL2, RBL1, RBL2, RBBP4, RBL2, TFDP1 and TFDP2. The complex exists in quiescent cells where it represses cell cycle-dependent genes. It dissociates in S phase when LIN9, LIN37, LIN52 and LIN54 form a subcomplex that binds to MYBL2.

The protein localises to the nucleus. In terms of biological role, component of the DREAM complex, a multiprotein complex that can both act as a transcription activator or repressor depending on the context. In G0 phase, the complex binds to more than 800 promoters and is required for repression of E2F target genes. In S phase, the complex selectively binds to the promoters of G2/M genes whose products are required for mitosis and participates in their cell cycle dependent activation. In the complex, acts as a DNA-binding protein that binds the promoter of CDK1 in a sequence-specific manner. Specifically recognizes the consensus motif 5'-TTYRAA-3' in target DNA. This Mus musculus (Mouse) protein is Protein lin-54 homolog (Lin54).